The sequence spans 431 residues: MSKILIRAMVLPMTGPEDFYPEGEIGIENDRILFVGEKGSAPDSFIPDQIIDLPEDVVMPGLINTHTHAAMTMLRSYADDLPLMPWLQTKIWPFEDKMSDEDIYWGTLLALGEMIQSGTTTMLDMYASMDQVAKAVLEAGTRGVLSRGLIGNAPNGERAFAENIDLVKNYHGAGQGRIQVMFGPHAPYTCSGEFLQRVKQEADRLGVGIHIHVAETEDEIKTIKEQYGKTPVQWLEELGLFGGHVVAAHCVHLTEEDQEIMAQNKVFIAHNPESNMKLNSGTAPIPELRSRGVVVGLGTDGTSSNNNLDMFGEMRSAAFQQKLVKGATALPAYEVLQMATVDGARTLGLHDVGVLAPGYKADLISINFDQPHFYPRFSIPAHLVYVAHAGDVRTVMVDGKILMQERQLMTIDIKRVCREVEKRAKGIAQGL.

Residues H66 and H68 each contribute to the Zn(2+) site. Residues E95, R147, and H185 each contribute to the substrate site. H212 contacts Zn(2+). Substrate is bound by residues E215 and D300. Residue D300 participates in Zn(2+) binding.

The protein belongs to the metallo-dependent hydrolases superfamily. MTA/SAH deaminase family. Requires Zn(2+) as cofactor.

The enzyme catalyses S-adenosyl-L-homocysteine + H2O + H(+) = S-inosyl-L-homocysteine + NH4(+). It carries out the reaction S-methyl-5'-thioadenosine + H2O + H(+) = S-methyl-5'-thioinosine + NH4(+). Functionally, catalyzes the deamination of 5-methylthioadenosine and S-adenosyl-L-homocysteine into 5-methylthioinosine and S-inosyl-L-homocysteine, respectively. Is also able to deaminate adenosine. In Desulfitobacterium hafniense (strain Y51), this protein is 5-methylthioadenosine/S-adenosylhomocysteine deaminase.